Consider the following 152-residue polypeptide: Ribosomal RNA large subunit methyltransferase H (152 aa).

S-adenosyl-L-methionine contacts are provided by residues Leu70, Gly102, and 120-125 (LSPMTF).

The protein belongs to the RNA methyltransferase RlmH family. In terms of assembly, homodimer.

The protein resides in the cytoplasm. It catalyses the reaction pseudouridine(1915) in 23S rRNA + S-adenosyl-L-methionine = N(3)-methylpseudouridine(1915) in 23S rRNA + S-adenosyl-L-homocysteine + H(+). Functionally, specifically methylates the pseudouridine at position 1915 (m3Psi1915) in 23S rRNA. The chain is Ribosomal RNA large subunit methyltransferase H from Pelobacter propionicus (strain DSM 2379 / NBRC 103807 / OttBd1).